Here is a 407-residue protein sequence, read N- to C-terminus: Tyrosine--tRNA ligase (407 aa).

Position 35 (Y35) interacts with L-tyrosine. A 'HIGH' region motif is present at residues 40–49 (PTADSLHVGH). The L-tyrosine site is built by Y168 and Q172. Residues 228 to 232 (KMGKT) carry the 'KMSKS' region motif. K231 serves as a coordination point for ATP. The S4 RNA-binding domain maps to 341-405 (NLLVDLLVKC…RGKKNFNRIV (65 aa)).

It belongs to the class-I aminoacyl-tRNA synthetase family. TyrS type 1 subfamily. As to quaternary structure, homodimer.

It is found in the cytoplasm. It carries out the reaction tRNA(Tyr) + L-tyrosine + ATP = L-tyrosyl-tRNA(Tyr) + AMP + diphosphate + H(+). In terms of biological role, catalyzes the attachment of tyrosine to tRNA(Tyr) in a two-step reaction: tyrosine is first activated by ATP to form Tyr-AMP and then transferred to the acceptor end of tRNA(Tyr). This Clostridium botulinum (strain Kyoto / Type A2) protein is Tyrosine--tRNA ligase.